A 154-amino-acid chain; its full sequence is Transcriptional repressor NrdR (154 aa).

Residues 3–34 fold into a zinc finger; it reads CPHCHKNGSRVVDSRPSEDGSFIRRRRECIHC. In terms of domain architecture, ATP-cone spans 49-139; it reads LLVIKKDGTR…VYRQFKDVDA (91 aa).

It belongs to the NrdR family. Requires Zn(2+) as cofactor.

Its function is as follows. Negatively regulates transcription of bacterial ribonucleotide reductase nrd genes and operons by binding to NrdR-boxes. The polypeptide is Transcriptional repressor NrdR (Limosilactobacillus reuteri (strain DSM 20016) (Lactobacillus reuteri)).